We begin with the raw amino-acid sequence, 242 residues long: Small ribosomal subunit protein uS2 (242 aa).

This sequence belongs to the universal ribosomal protein uS2 family.

The sequence is that of Small ribosomal subunit protein uS2 from Idiomarina loihiensis (strain ATCC BAA-735 / DSM 15497 / L2-TR).